A 262-amino-acid chain; its full sequence is UPF0619 GPI-anchored membrane protein C1322.10 (262 aa).

Positions 1 to 20 are cleaved as a signal peptide; that stretch reads MLARVGTTLFFLANALAAYA. 2 disordered regions span residues 136-165 and 175-194; these read STSA…SSST and ISSS…SGSI. Residues Asn-207 and Asn-227 are each glycosylated (N-linked (GlcNAc...) asparagine). Residue Asn-242 is the site of GPI-like-anchor amidated asparagine attachment. Residues 243–262 constitute a propeptide, removed in mature form; sequence GVAQLSVAACMGIAALMLIA.

This sequence belongs to the UPF0619 family.

The protein resides in the golgi apparatus membrane. It is found in the cell membrane. In Schizosaccharomyces pombe (strain 972 / ATCC 24843) (Fission yeast), this protein is UPF0619 GPI-anchored membrane protein C1322.10.